Here is a 181-residue protein sequence, read N- to C-terminus: 6,7-dimethyl-8-ribityllumazine synthase (181 aa).

Residues Phe24, Ser62 to Glu64, and Ala86 to Ile88 contribute to the 5-amino-6-(D-ribitylamino)uracil site. Residue Gln91–Thr92 participates in (2S)-2-hydroxy-3-oxobutyl phosphate binding. His94 serves as the catalytic Proton donor. Position 119 (Phe119) interacts with 5-amino-6-(D-ribitylamino)uracil. (2S)-2-hydroxy-3-oxobutyl phosphate is bound at residue Arg133.

The protein belongs to the DMRL synthase family.

It carries out the reaction (2S)-2-hydroxy-3-oxobutyl phosphate + 5-amino-6-(D-ribitylamino)uracil = 6,7-dimethyl-8-(1-D-ribityl)lumazine + phosphate + 2 H2O + H(+). Its pathway is cofactor biosynthesis; riboflavin biosynthesis; riboflavin from 2-hydroxy-3-oxobutyl phosphate and 5-amino-6-(D-ribitylamino)uracil: step 1/2. In terms of biological role, catalyzes the formation of 6,7-dimethyl-8-ribityllumazine by condensation of 5-amino-6-(D-ribitylamino)uracil with 3,4-dihydroxy-2-butanone 4-phosphate. This is the penultimate step in the biosynthesis of riboflavin. The sequence is that of 6,7-dimethyl-8-ribityllumazine synthase from Microcystis aeruginosa (strain NIES-843 / IAM M-2473).